The chain runs to 496 residues: Probable CtpA-like serine protease (496 aa).

A compositionally biased stretch (basic and acidic residues) spans 1 to 16 (MDDKQHTSSSDDERAE). Residues 1–27 (MDDKQHTSSSDDERAEIATSNQDQQTN) are disordered. Positions 18–27 (ATSNQDQQTN) are enriched in polar residues. A helical transmembrane segment spans residues 39–59 (FISILIGTILITAVITVVAYI). The 83-residue stretch at 124-206 (TKSFNEGVSG…TEVTLTVQRG (83 aa)) folds into the PDZ domain. Residues Ser329, Asp340, and Lys354 each act as charge relay system in the active site.

This sequence belongs to the peptidase S41A family.

The protein localises to the cell membrane. The sequence is that of Probable CtpA-like serine protease from Staphylococcus aureus (strain bovine RF122 / ET3-1).